A 417-amino-acid polypeptide reads, in one-letter code: Actin-related protein 10 (417 aa).

It belongs to the actin family. In terms of assembly, subunit of dynactin, a multiprotein complex part of a tripartite complex with dynein and a adapter, such as BICDL1, BICD2 or HOOK3. The dynactin complex is built around ACTR1A/ACTB filament and consists of an actin-related filament composed of a shoulder domain, a pointed end and a barbed end. Its length is defined by its flexible shoulder domain. The soulder is composed of 2 DCTN1 subunits, 4 DCTN2 and 2 DCTN3. The 4 DCNT2 (via N-terminus) bind the ACTR1A filament and act as molecular rulers to determine the length. The pointed end is important for binding dynein-dynactin cargo adapters. Consists of 4 subunits: ACTR10, DCNT4, DCTN5 and DCTN6. The barbed end is composed of a CAPZA1:CAPZB heterodimers, which binds ACTR1A/ACTB filament and dynactin and stabilizes dynactin.

Its subcellular location is the cytoplasm. The protein localises to the cytoskeleton. Its function is as follows. Part of the dynactin complex that activates the molecular motor dynein for ultra-processive transport along microtubules. This Sus scrofa (Pig) protein is Actin-related protein 10 (ACTR10).